The following is a 461-amino-acid chain: Cysteine--tRNA ligase (461 aa).

Cys-28 is a binding site for Zn(2+). Residues 30 to 40 (ITVYDLCHIGH) carry the 'HIGH' region motif. Positions 209, 234, and 238 each coordinate Zn(2+). The 'KMSKS' region signature appears at 266 to 270 (KMSKS). An ATP-binding site is contributed by Lys-269.

It belongs to the class-I aminoacyl-tRNA synthetase family. Monomer. The cofactor is Zn(2+).

Its subcellular location is the cytoplasm. The enzyme catalyses tRNA(Cys) + L-cysteine + ATP = L-cysteinyl-tRNA(Cys) + AMP + diphosphate. The chain is Cysteine--tRNA ligase from Salmonella agona (strain SL483).